A 315-amino-acid polypeptide reads, in one-letter code: Putative serine/threonine-protein phosphatase PP2A-4 catalytic subunit (315 aa).

Positions 63, 65, 91, and 123 each coordinate Mn(2+). The Proton donor role is filled by histidine 124. Positions 173 and 247 each coordinate Mn(2+).

The protein belongs to the PPP phosphatase family. PP-2A subfamily. It depends on Mn(2+) as a cofactor.

Its subcellular location is the cytoplasm. It catalyses the reaction O-phospho-L-seryl-[protein] + H2O = L-seryl-[protein] + phosphate. The catalysed reaction is O-phospho-L-threonyl-[protein] + H2O = L-threonyl-[protein] + phosphate. This is Putative serine/threonine-protein phosphatase PP2A-4 catalytic subunit (PP2A4) from Oryza sativa subsp. indica (Rice).